Consider the following 468-residue polypeptide: Pituitary adenylate cyclase-activating polypeptide type I receptor (468 aa).

Positions 1–20 are cleaved as a signal peptide; it reads MAGVVHVSLAALLLLPMAPA. Over 21 to 152 the chain is Extracellular; that stretch reads MHSDCIFKKE…TGDQDYYYLS (132 aa). 3 disulfide bridges follow: Cys34–Cys63, Cys54–Cys118, and Cys77–Cys134. Asn48, Asn60, and Asn117 each carry an N-linked (GlcNAc...) asparagine glycan. The segment at 125 to 139 is important for ADCYAP1/PACAP ligand binding and specificity; the sequence is EPFPHYFDACGFDEY. The helical transmembrane segment at 153-177 threads the bilayer; it reads VKALYTVGYSTSLVTLTTAMVILCR. Residues 178 to 187 are Cytoplasmic-facing; that stretch reads FRKLHCTRNF. The helical transmembrane segment at 188–208 threads the bilayer; it reads IHMNLFVSFMLRAISVFIKDW. The Extracellular portion of the chain corresponds to 209–223; the sequence is ILYAEQDSNHCFIST. Residues 224 to 249 form a helical membrane-spanning segment; sequence VECKAVMVFFHYCVVSNYFWLFIEGL. Cys226 and Cys296 form a disulfide bridge. Topologically, residues 250-267 are cytoplasmic; the sequence is YLFTLLVETFFPERRYFY. A helical transmembrane segment spans residues 268-290; sequence WYTIIGWGTPTVCVTVWATLRLY. At 291–302 the chain is on the extracellular side; that stretch reads FDDTGCWDMNDS. The N-linked (GlcNAc...) asparagine glycan is linked to Asn300. The chain crosses the membrane as a helical span at residues 303–329; it reads TALWWVIKGPVVGSIMVNFVLFIGIIV. Topologically, residues 330 to 347 are cytoplasmic; that stretch reads ILVQKLQSPDMGGNESSI. Residues 348 to 374 traverse the membrane as a helical segment; that stretch reads YLRLARSTLLLIPLFGIHYTVFAFSPE. N-linked (GlcNAc...) asparagine glycosylation is present at Asn375. Topologically, residues 375-379 are extracellular; sequence NVSKR. Residues 380 to 403 form a helical membrane-spanning segment; that stretch reads ERLVFELGLGSFQGFVVAVLYCFL. Residues 404 to 468 are Cytoplasmic-facing; the sequence is NGEVQAEIKR…SGLPADNLAT (65 aa). Ser434 and Ser447 each carry phosphoserine.

It belongs to the G-protein coupled receptor 2 family. As to quaternary structure, interacts with maxadilan, a vasodilator peptide from Lutzomyia longipalpis saliva; the interaction results in ADCYAP1R1 activation. Most abundant in the brain, low expression in the lung, liver, thymus, spleen, pancreas and placenta.

The protein localises to the cell membrane. Several synthetic peptides derived from maxadilan, a vasodilator peptide from Lutzomyia longipalpis saliva, act as antagonists for ADCYAP1R1. Its function is as follows. G protein-coupled receptor activated by the neuropeptide pituitary adenylate cyclase-activating polypeptide (ADCYAP1/PACAP). Binds both PACAP27 and PACAP38 bioactive peptides. Ligand binding causes a conformation change that triggers signaling via guanine nucleotide-binding proteins (G proteins) and modulates the activity of downstream effectors. Activates cAMP-dependent pathway. May regulate the release of adrenocorticotropin, luteinizing hormone, growth hormone, prolactin, epinephrine, and catecholamine. May play a role in spermatogenesis and sperm motility. Causes smooth muscle relaxation and secretion in the gastrointestinal tract. This chain is Pituitary adenylate cyclase-activating polypeptide type I receptor, found in Homo sapiens (Human).